The following is a 290-amino-acid chain: 1D-myo-inositol 2-acetamido-2-deoxy-alpha-D-glucopyranoside deacetylase (290 aa).

H17, D20, and H150 together coordinate Zn(2+).

It belongs to the MshB deacetylase family. Zn(2+) is required as a cofactor.

It carries out the reaction 1D-myo-inositol 2-acetamido-2-deoxy-alpha-D-glucopyranoside + H2O = 1D-myo-inositol 2-amino-2-deoxy-alpha-D-glucopyranoside + acetate. In terms of biological role, catalyzes the deacetylation of 1D-myo-inositol 2-acetamido-2-deoxy-alpha-D-glucopyranoside (GlcNAc-Ins) in the mycothiol biosynthesis pathway. This Corynebacterium glutamicum (strain R) protein is 1D-myo-inositol 2-acetamido-2-deoxy-alpha-D-glucopyranoside deacetylase.